Reading from the N-terminus, the 119-residue chain is Ribonuclease P protein component (119 aa).

It belongs to the RnpA family. In terms of assembly, consists of a catalytic RNA component (M1 or rnpB) and a protein subunit.

It catalyses the reaction Endonucleolytic cleavage of RNA, removing 5'-extranucleotides from tRNA precursor.. Functionally, RNaseP catalyzes the removal of the 5'-leader sequence from pre-tRNA to produce the mature 5'-terminus. It can also cleave other RNA substrates such as 4.5S RNA. The protein component plays an auxiliary but essential role in vivo by binding to the 5'-leader sequence and broadening the substrate specificity of the ribozyme. This is Ribonuclease P protein component from Pectobacterium atrosepticum (strain SCRI 1043 / ATCC BAA-672) (Erwinia carotovora subsp. atroseptica).